Reading from the N-terminus, the 387-residue chain is Probable 1-alkyl-2-acetylglycerophosphocholine esterase (387 aa).

A signal peptide spans 1-17; it reads MLVQGTIICALVANAIA. Residues asparagine 51 and asparagine 141 are each glycosylated (N-linked (GlcNAc...) asparagine). Residue serine 227 is the Nucleophile of the active site. Residue aspartate 250 is the Charge relay system of the active site. An N-linked (GlcNAc...) asparagine glycan is attached at asparagine 283. The Charge relay system role is filled by histidine 313.

The protein belongs to the AB hydrolase superfamily. Lipase family.

The protein resides in the secreted. The enzyme catalyses a 1-O-alkyl-2-acetyl-sn-glycero-3-phosphocholine + H2O = a 1-O-alkyl-sn-glycero-3-phosphocholine + acetate + H(+). This Arthroderma benhamiae (strain ATCC MYA-4681 / CBS 112371) (Trichophyton mentagrophytes) protein is Probable 1-alkyl-2-acetylglycerophosphocholine esterase.